The chain runs to 499 residues: MTPVVALVGRPNVGKSTLFNRLTRTRDALVADFPGLTRDRKYGQAKLGELEFIVVDTGGIDGTEEGIELKMAEQSLLAIEEADVVLFMVDARAGLTAADQAIAAHLRKTHKKVFLVANKTDGIDGDSAVSEFYCLALGDVYQIAAAHGRGVLSLLELALAPHLETLVDAAAEEDAQDEEEEDFDEEALLRMVAAGDLDTREDTKETPFADLPIKFAIVGRPNVGKSTLTNRMLGEDRVIVYDMPGTTRDSVYVPMERDEQKYVVIDTAGVRRRGKVHETVEKFSVIKTLKAIEDANVCLLVIDAQETITDQDLSILGFVLHSGRSVVLVVNKWDGLDQKVKEDVKNELDRRLGFIDFARVHFISALHGSGVGHLFESIQEAYQSATRRTSTAMLTRIMQMAQEDHQPPMVNGRRVKLKYAHAGGYNPPRIVIHGNQLNDLPDSYKRYLINYFRKSLKIMGSPIRVEFQESANPFEGRKNTMTLSQERQRKRLLKAKTKK.

EngA-type G domains are found at residues 3 to 166 and 213 to 386; these read PVVA…LETL and IKFA…QSAT. Residues 9–16, 56–60, 118–121, 219–226, 266–270, and 331–334 contribute to the GTP site; these read GRPNVGKS, DTGGI, NKTD, DTAGV, and NKWD. Residues 387 to 471 form the KH-like domain; that stretch reads RRTSTAMLTR…PIRVEFQESA (85 aa). Residues 476–499 are disordered; the sequence is GRKNTMTLSQERQRKRLLKAKTKK. A compositionally biased stretch (basic residues) spans 488-499; sequence QRKRLLKAKTKK.

Belongs to the TRAFAC class TrmE-Era-EngA-EngB-Septin-like GTPase superfamily. EngA (Der) GTPase family. Associates with the 50S ribosomal subunit.

Its function is as follows. GTPase that plays an essential role in the late steps of ribosome biogenesis. The protein is GTPase Der of Aeromonas salmonicida (strain A449).